The primary structure comprises 83 residues: MRLILSLPVLAVVLAMVLEGPAPAQAAPDVSSTLESISEKLTEFGRTVADKFRTAVDQIKKSDFPEKTRNWFSEMFNKLKEKF.

Positions 1-26 (MRLILSLPVLAVVLAMVLEGPAPAQA) are cleaved as a signal peptide.

Belongs to the apolipoprotein C1 family.

The protein localises to the secreted. In terms of biological role, inhibitor of lipoprotein binding to the low density lipoprotein (LDL) receptor, LDL receptor-related protein, and very low density lipoprotein (VLDL) receptor. Associates with high density lipoproteins (HDL) and the triacylglycerol-rich lipoproteins in the plasma and makes up about 10% of the protein of the VLDL and 2% of that of HDL. Appears to interfere directly with fatty acid uptake and is also the major plasma inhibitor of cholesteryl ester transfer protein (CETP). Binds free fatty acids and reduces their intracellular esterification. Modulates the interaction of APOE with beta-migrating VLDL and inhibits binding of beta-VLDL to the LDL receptor-related protein. This Rousettus aegyptiacus (Egyptian fruit bat) protein is Apolipoprotein C-I (APOC1).